The chain runs to 927 residues: LPS-assembly protein LptD (927 aa).

The N-terminal stretch at Met1–Ala22 is a signal peptide. The tract at residues Leu60 to Lys100 is disordered. The segment covering Ser70–Glu86 has biased composition (low complexity).

Belongs to the LptD family. In terms of assembly, component of the lipopolysaccharide transport and assembly complex. Interacts with LptE and LptA.

It is found in the cell outer membrane. Functionally, together with LptE, is involved in the assembly of lipopolysaccharide (LPS) at the surface of the outer membrane. This Pseudomonas syringae pv. tomato (strain ATCC BAA-871 / DC3000) protein is LPS-assembly protein LptD.